The following is a 133-amino-acid chain: Cytochrome b5 (133 aa).

Positions glutamate 4–lysine 86 constitute a Cytochrome b5 heme-binding domain. The heme site is built by histidine 45 and histidine 69. A helical transmembrane segment spans residues serine 108–tyrosine 128.

Belongs to the cytochrome b5 family. Interacts with alternative squalene epoxidase PHATRDRAFT_45494.

It is found in the endoplasmic reticulum membrane. Functionally, hemoprotein that functions as an electron carrier for membrane bound monooxygenases involved in sterol biosynthesis. This is Cytochrome b5 from Phaeodactylum tricornutum (strain CCAP 1055/1).